The chain runs to 103 residues: uncharacterized protein (103 aa).

The helical transmembrane segment at 38 to 58 (FTTLITIYVAAFYTGVIGAAV) threads the bilayer.

The protein localises to the membrane. This is an uncharacterized protein from Arabidopsis thaliana (Mouse-ear cress).